The sequence spans 412 residues: Argininosuccinate synthase (412 aa).

ATP-binding positions include 10 to 18 (AYSGGLDTS) and alanine 36. Positions 87 and 92 each coordinate L-citrulline. Residue tyrosine 87 is modified to Phosphotyrosine. Residue lysine 112 is modified to N6-acetyllysine. At tyrosine 113 the chain carries Phosphotyrosine. 115 to 123 (SHGATGKGN) lines the ATP pocket. L-aspartate-binding residues include threonine 119, asparagine 123, and aspartate 124. Asparagine 123 is an L-citrulline binding site. Position 127 (arginine 127) interacts with L-citrulline. An N6-acetyllysine; by CLOCK mark is found at lysine 165 and lysine 176. L-citrulline contacts are provided by serine 180 and serine 189. Serine 180 bears the Phosphoserine mark. At threonine 219 the chain carries Phosphothreonine. Glutamate 270 and tyrosine 282 together coordinate L-citrulline.

The protein belongs to the argininosuccinate synthase family. Type 1 subfamily. In terms of assembly, homotetramer. Interacts with NMRAL1. Interacts with CLOCK; in a circadian manner. Forms tissue-specific complexes with ASL, SLC7A1, HSP90AA1 and nitric oxide synthase NOS1, NOS2 or NOS3; the complex regulates cell-autonomous L-arginine synthesis and citrulline recycling while channeling extracellular L-arginine to nitric oxide synthesis pathway. Post-translationally, acetylated by CLOCK in a circadian manner which negatively regulates its enzyme activity. Deacetylated by histone deacetylases. In terms of tissue distribution, expressed in adult liver.

The protein localises to the cytoplasm. Its subcellular location is the cytosol. It carries out the reaction L-citrulline + L-aspartate + ATP = 2-(N(omega)-L-arginino)succinate + AMP + diphosphate + H(+). The protein operates within amino-acid biosynthesis; L-arginine biosynthesis; L-arginine from L-ornithine and carbamoyl phosphate: step 2/3. It functions in the pathway nitrogen metabolism; urea cycle; (N(omega)-L-arginino)succinate from L-aspartate and L-citrulline: step 1/1. In terms of biological role, one of the enzymes of the urea cycle, the metabolic pathway transforming neurotoxic amonia produced by protein catabolism into inocuous urea in the liver of ureotelic animals. Catalyzes the formation of arginosuccinate from aspartate, citrulline and ATP and together with ASL it is responsible for the biosynthesis of arginine in most body tissues. In Homo sapiens (Human), this protein is Argininosuccinate synthase.